The chain runs to 435 residues: 3-phosphoshikimate 1-carboxyvinyltransferase (435 aa).

3 residues coordinate 3-phosphoshikimate: Lys-23, Ser-24, and Arg-28. Residue Lys-23 coordinates phosphoenolpyruvate. Gly-97 and Arg-125 together coordinate phosphoenolpyruvate. The 3-phosphoshikimate site is built by Ser-170, Ser-171, Gln-172, Ser-198, Asp-314, Asn-338, and Lys-342. Residue Gln-172 participates in phosphoenolpyruvate binding. The Proton acceptor role is filled by Asp-314. Phosphoenolpyruvate is bound by residues Arg-346, Arg-388, and Lys-413.

It belongs to the EPSP synthase family. In terms of assembly, monomer.

It localises to the cytoplasm. It carries out the reaction 3-phosphoshikimate + phosphoenolpyruvate = 5-O-(1-carboxyvinyl)-3-phosphoshikimate + phosphate. It participates in metabolic intermediate biosynthesis; chorismate biosynthesis; chorismate from D-erythrose 4-phosphate and phosphoenolpyruvate: step 6/7. Its function is as follows. Catalyzes the transfer of the enolpyruvyl moiety of phosphoenolpyruvate (PEP) to the 5-hydroxyl of shikimate-3-phosphate (S3P) to produce enolpyruvyl shikimate-3-phosphate and inorganic phosphate. In Sodalis glossinidius (strain morsitans), this protein is 3-phosphoshikimate 1-carboxyvinyltransferase.